Reading from the N-terminus, the 415-residue chain is Dibenzothiophene monooxygenase (415 aa).

FMN contacts are provided by residues Tyr-94, 127 to 132 (NASSEN), 157 to 161 (KHFSS), Arg-280, 365 to 366 (IG), and Thr-387. Positions 129–140 (SSENNSHILDWK) are lid loop.

This sequence belongs to the DszC flavin monooxygenase family. In terms of assembly, homotetramer.

The protein localises to the cytoplasm. It carries out the reaction dibenzothiophene + 2 FMNH2 + 2 O2 = dibenzothiophene 5,5-dioxide + 2 FMN + 2 H2O + 2 H(+). It catalyses the reaction dibenzothiophene + FMNH2 + O2 = dibenzothiophene 5-oxide + FMN + H2O + H(+). The enzyme catalyses dibenzothiophene 5-oxide + FMNH2 + O2 = dibenzothiophene 5,5-dioxide + FMN + H2O + H(+). It functions in the pathway sulfur metabolism; dibenzothiophene degradation. Its activity is regulated as follows. Inhibited at high concentrations of FMN or FAD. Its function is as follows. Catalyzes the first step of the '4S' desulfurization pathway that removes covalently bound sulfur from dibenzothiophene (DBT) without breaking carbon-carbon bonds. Sulfur dioxygenase which converts DBT to DBT-sulfone (DBTO2 or DBT 5,5-dioxide) probably in a stepwise manner. In addition to FMNH2 can also use FAD (although FAD is less efficient). The sequence is that of Dibenzothiophene monooxygenase from Mycolicibacterium goodii (Mycobacterium goodii).